A 265-amino-acid polypeptide reads, in one-letter code: Apolipoprotein A-I (265 aa).

Positions 1-18 (MKAVVLAVAALFLAGGEA) are cleaved as a signal peptide. 2 consecutive repeat copies span residues 68–89 (LKLT…EQLG) and 90–111 (PVTQ…QEMN). A 10 X approximate tandem repeats region spans residues 68-265 (LKLTENLDTL…EEASKKLSSQ (198 aa)). A Methionine sulfoxide modification is found at methionine 110. One copy of the 3; half-length repeat lies at 112–122 (KDLADMKQKVQ). Tandem repeats lie at residues 123 to 144 (PYME…QKVE), 145 to 166 (PLST…EKLA), and 167 to 188 (PLGA…TQLA). A 7; truncated repeat occupies 189–208 (PYSEQMRERLAERLAALRDS). Residue methionine 194 is modified to Methionine sulfoxide. Copy 8 of the repeat occupies 209-230 (PSLAEYQAKAHEHLKTLHEKAQ). The 9; half-length repeat unit spans residues 231–241 (PALSDLGQGVL). Copy 10 of the repeat occupies 242-265 (PVLESLKATLVGAIEEASKKLSSQ).

It belongs to the apolipoprotein A1/A4/E family. Homodimer. Interacts with APOA1BP and CLU. Component of a sperm activating protein complex (SPAP), consisting of APOA1, an immunoglobulin heavy chain, an immunoglobulin light chain and albumin. Interacts with NDRG1. Interacts with SCGB3A2. Interacts with NAXE and YJEFN3. Post-translationally, glycosylated. Palmitoylated. In terms of processing, phosphorylation sites are present in the extracellular medium.

The protein resides in the secreted. Participates in the reverse transport of cholesterol from tissues to the liver for excretion by promoting cholesterol efflux from tissues and by acting as a cofactor for the lecithin cholesterol acyltransferase (LCAT). As part of the SPAP complex, activates spermatozoa motility. In Dipodomys ordii (Ord's kangaroo rat), this protein is Apolipoprotein A-I (Apoa1).